The chain runs to 373 residues: Methylmalonyl-CoA decarboxylase subunit beta (373 aa).

Helical transmembrane passes span Phe-17–Leu-37, Ala-38–Ala-58, Ile-81–Ala-101, Leu-106–Leu-126, Glu-132–Thr-152, Pro-156–Ile-176, Ile-206–Leu-226, Val-257–Leu-277, Ile-280–Phe-300, and Phe-343–Ala-363.

The protein belongs to the GcdB/MmdB/OadB family. As to quaternary structure, the methylmalonyl-CoA decarboxylase is composed of five subunits: the carboxyltransferase alpha subunit (MmdA), the tunnel beta subunit (MmdB), the biotin-containing gamma subunit (MmdC), and the delta (MmdD) and epsilon (MmdE) subunits. The N-terminus is blocked.

The protein resides in the cell membrane. The catalysed reaction is (S)-methylmalonyl-CoA + Na(+)(in) + H(+)(out) = propanoyl-CoA + Na(+)(out) + CO2. Completely inhibited by avidin. Tunnel subunit of the sodium ion pump methylmalonyl-CoA decarboxylase, which converts the chemical energy of a decarboxylation reaction into an electrochemical gradient of Na(+) ions across the cytoplasmic membrane, thereby creating a sodium ion motive force that is used for ATP synthesis. The beta subunit catalyzes the decarboxylation of the carboxybiotin carrier protein and the coupled export of Na(+) ions. Can also convert malonyl-CoA into acetyl-CoA. The chain is Methylmalonyl-CoA decarboxylase subunit beta from Veillonella parvula (Staphylococcus parvulus).